The primary structure comprises 362 residues: Peptide chain release factor 1 (362 aa).

Glutamine 237 bears the N5-methylglutamine mark. A disordered region spans residues 279–305; it reads RLQQAEDEKRRSEEESSRRNLVASGDR. Residues 282-296 are compositionally biased toward basic and acidic residues; that stretch reads QAEDEKRRSEEESSR.

This sequence belongs to the prokaryotic/mitochondrial release factor family. Post-translationally, methylated by PrmC. Methylation increases the termination efficiency of RF1.

It is found in the cytoplasm. In terms of biological role, peptide chain release factor 1 directs the termination of translation in response to the peptide chain termination codons UAG and UAA. The chain is Peptide chain release factor 1 from Colwellia psychrerythraea (strain 34H / ATCC BAA-681) (Vibrio psychroerythus).